The sequence spans 1662 residues: Cortactin-binding protein 2 (1662 aa).

5 disordered regions span residues 1–23 (MATD…AGAA), 203–222 (KKKT…RSTE), 361–440 (SHSD…LHPG), 454–479 (GNAN…PTSR), and 498–618 (RFTS…PSID). A coiled-coil region spans residues 119–276 (KKMQERMSAQ…EQLKRGSDSK (158 aa)). Residues 386–396 (PSTDSTPDPTS) are compositionally biased toward low complexity. The span at 411–422 (QTPGIAPQNSQA) shows a compositional bias: polar residues. Position 498 is an asymmetric dimethylarginine (Arg498). Positions 583 to 597 (TVASPPSSLPQGNRV) are enriched in polar residues. ANK repeat units follow at residues 709–739 (GRPT…DINY), 743–772 (DGHS…QINA), 776–805 (NGFT…NINH), 809–838 (GGQT…NRSV), 842–871 (DGWT…PACG), and 912–942 (EGWT…EPER). The tract at residues 1450-1474 (GESGAWRKVNTSPRRKSGRFSLPTW) is disordered. At Ser1524 the chain carries Phosphoserine. 2 disordered regions span residues 1580 to 1602 (SQKE…KSKT) and 1618 to 1662 (SKVT…KPNK). Residues 1582–1599 (KEVSPLSSHQTTECSNSK) show a composition bias toward polar residues. The segment covering 1624-1638 (SQNTKRSSSSSNTRQ) has biased composition (low complexity). The segment covering 1639–1648 (IEINNNSKEN) has biased composition (polar residues). Positions 1649–1662 (WNLHKNEHLDKPNK) are enriched in basic and acidic residues.

In terms of assembly, interacts with CTTN/cortactin SH3 domain. Interacts with STRN, STRN4/zinedin and MOB4/phocein; this interactions mediate the association with the STRIPAK core complex and may regulate dendritic spine distribution of the STRIPAK complex in hippocampal neurons. Activation of glutamate receptors weakens the interaction with STRN and STRN4.

It is found in the cytoplasm. It localises to the cell cortex. Its subcellular location is the cell projection. The protein localises to the dendritic spine. Regulates the dendritic spine distribution of CTTN/cortactin in hippocampal neurons, and thus controls dendritic spinogenesis and dendritic spine maintenance. Associates with the striatin-interacting phosphatase and kinase (STRIPAK) core complex to regulate dendritic spine distribution of the STRIPAK complex in hippocampal neurons. In Chlorocebus aethiops (Green monkey), this protein is Cortactin-binding protein 2 (CTTNBP2).